A 307-amino-acid polypeptide reads, in one-letter code: Cilia-and flagella-associated protein 96 (307 aa).

2 disordered regions span residues 73–102 and 218–279; these read YSDP…SSGE and HSQK…GPKT.

The protein belongs to the CFAP96 family.

The protein resides in the cytoplasm. It is found in the cytoskeleton. The protein localises to the microtubule organizing center. It localises to the centrosome. The polypeptide is Cilia-and flagella-associated protein 96 (cfap96.L) (Xenopus laevis (African clawed frog)).